The sequence spans 412 residues: Phosphoglycerate kinase (412 aa).

Substrate-binding positions include 24-26 (DLN), Arg-47, 70-73 (HLGR), Arg-130, and Arg-167. ATP is bound by residues Lys-217, Gly-312, Glu-343, and 369–372 (GGDS).

This sequence belongs to the phosphoglycerate kinase family. Monomer.

It is found in the cytoplasm. It catalyses the reaction (2R)-3-phosphoglycerate + ATP = (2R)-3-phospho-glyceroyl phosphate + ADP. It functions in the pathway carbohydrate degradation; glycolysis; pyruvate from D-glyceraldehyde 3-phosphate: step 2/5. The chain is Phosphoglycerate kinase from Kineococcus radiotolerans (strain ATCC BAA-149 / DSM 14245 / SRS30216).